Reading from the N-terminus, the 395-residue chain is Putative 8-amino-7-oxononanoate synthase (395 aa).

Arginine 23 contributes to the substrate binding site. 110–111 (GF) contributes to the pyridoxal 5'-phosphate binding site. Histidine 135 is a substrate binding site. Pyridoxal 5'-phosphate contacts are provided by residues serine 182, 207-210 (DEAH), and 239-242 (TFSK). At lysine 242 the chain carries N6-(pyridoxal phosphate)lysine. A substrate-binding site is contributed by threonine 356.

The protein belongs to the class-II pyridoxal-phosphate-dependent aminotransferase family. BioF subfamily. Homodimer. It depends on pyridoxal 5'-phosphate as a cofactor.

The enzyme catalyses 6-carboxyhexanoyl-[ACP] + L-alanine + H(+) = (8S)-8-amino-7-oxononanoate + holo-[ACP] + CO2. The protein operates within cofactor biosynthesis; biotin biosynthesis. Functionally, catalyzes the decarboxylative condensation of pimeloyl-[acyl-carrier protein] and L-alanine to produce 8-amino-7-oxononanoate (AON), [acyl-carrier protein], and carbon dioxide. This is Putative 8-amino-7-oxononanoate synthase (bioF) from Bacillus anthracis.